The sequence spans 146 residues: Large ribosomal subunit protein uL15 (146 aa).

A disordered region spans residues 1 to 54; sequence MKLHELQPAAGSRKAPKRVGRGTGSGLGRNAGKGEKGQNARSGGGVRPGFEGGQ. Gly residues-rich tracts occupy residues 21-31 and 42-52; these read RGTGSGLGRNA and SGGGVRPGFEG.

It belongs to the universal ribosomal protein uL15 family. As to quaternary structure, part of the 50S ribosomal subunit.

In terms of biological role, binds to the 23S rRNA. This is Large ribosomal subunit protein uL15 from Clostridium botulinum (strain Alaska E43 / Type E3).